Consider the following 199-residue polypeptide: Thymidine kinase (199 aa).

ATP is bound by residues 9–16 (GAMSSGKS) and 93–96 (DEAQ). The Proton acceptor role is filled by E94. 4 residues coordinate Zn(2+): C151, C154, C188, and H191.

Belongs to the thymidine kinase family. Homotetramer.

Its subcellular location is the cytoplasm. The enzyme catalyses thymidine + ATP = dTMP + ADP + H(+). The sequence is that of Thymidine kinase from Lactobacillus johnsonii (strain CNCM I-12250 / La1 / NCC 533).